The sequence spans 938 residues: Isoleucine--tRNA ligase (938 aa).

Residues 61–71 carry the 'HIGH' region motif; it reads PYANGDIHLGT. Glutamate 559 contacts L-isoleucyl-5'-AMP. The 'KMSKS' region signature appears at 601–605; sequence KMSKS. Position 604 (lysine 604) interacts with ATP. Positions 904, 907, 923, and 926 each coordinate Zn(2+).

Belongs to the class-I aminoacyl-tRNA synthetase family. IleS type 1 subfamily. As to quaternary structure, monomer. Zn(2+) serves as cofactor.

The protein resides in the cytoplasm. It carries out the reaction tRNA(Ile) + L-isoleucine + ATP = L-isoleucyl-tRNA(Ile) + AMP + diphosphate. Its function is as follows. Catalyzes the attachment of isoleucine to tRNA(Ile). As IleRS can inadvertently accommodate and process structurally similar amino acids such as valine, to avoid such errors it has two additional distinct tRNA(Ile)-dependent editing activities. One activity is designated as 'pretransfer' editing and involves the hydrolysis of activated Val-AMP. The other activity is designated 'posttransfer' editing and involves deacylation of mischarged Val-tRNA(Ile). This Symbiobacterium thermophilum (strain DSM 24528 / JCM 14929 / IAM 14863 / T) protein is Isoleucine--tRNA ligase.